Here is a 327-residue protein sequence, read N- to C-terminus: tRNA uridine(34) hydroxylase (327 aa).

The Rhodanese domain maps to 122–218; sequence QENRCLVLDV…YGLKMGTGKW (97 aa). The active-site Cysteine persulfide intermediate is C178.

This sequence belongs to the TrhO family.

It catalyses the reaction uridine(34) in tRNA + AH2 + O2 = 5-hydroxyuridine(34) in tRNA + A + H2O. Its function is as follows. Catalyzes oxygen-dependent 5-hydroxyuridine (ho5U) modification at position 34 in tRNAs. The protein is tRNA uridine(34) hydroxylase of Chlamydia trachomatis serovar L2 (strain ATCC VR-902B / DSM 19102 / 434/Bu).